The chain runs to 159 residues: Ribosomal RNA large subunit methyltransferase H (159 aa).

S-adenosyl-L-methionine-binding positions include Leu-76, Gly-108, and 127–132; that span reads FSKMTF.

This sequence belongs to the RNA methyltransferase RlmH family. Homodimer.

It localises to the cytoplasm. It catalyses the reaction pseudouridine(1915) in 23S rRNA + S-adenosyl-L-methionine = N(3)-methylpseudouridine(1915) in 23S rRNA + S-adenosyl-L-homocysteine + H(+). Its function is as follows. Specifically methylates the pseudouridine at position 1915 (m3Psi1915) in 23S rRNA. The protein is Ribosomal RNA large subunit methyltransferase H of Clostridium botulinum (strain Kyoto / Type A2).